Reading from the N-terminus, the 477-residue chain is Glycogen synthase (477 aa).

Position 15 (lysine 15) interacts with ADP-alpha-D-glucose.

Belongs to the glycosyltransferase 1 family. Bacterial/plant glycogen synthase subfamily.

The catalysed reaction is [(1-&gt;4)-alpha-D-glucosyl](n) + ADP-alpha-D-glucose = [(1-&gt;4)-alpha-D-glucosyl](n+1) + ADP + H(+). It functions in the pathway glycan biosynthesis; glycogen biosynthesis. In terms of biological role, synthesizes alpha-1,4-glucan chains using ADP-glucose. The sequence is that of Glycogen synthase from Streptococcus pneumoniae (strain JJA).